A 352-amino-acid chain; its full sequence is Glycerol-3-phosphate dehydrogenase [NAD(P)+] (352 aa).

Positions 11, 12, 32, and 105 each coordinate NADPH. Sn-glycerol 3-phosphate contacts are provided by lysine 105, glycine 133, and serine 135. Alanine 137 serves as a coordination point for NADPH. The sn-glycerol 3-phosphate site is built by lysine 188, aspartate 241, serine 251, arginine 252, and asparagine 253. Lysine 188 functions as the Proton acceptor in the catalytic mechanism. An NADPH-binding site is contributed by arginine 252. The NADPH site is built by valine 276 and glutamate 278.

It belongs to the NAD-dependent glycerol-3-phosphate dehydrogenase family.

Its subcellular location is the cytoplasm. The enzyme catalyses sn-glycerol 3-phosphate + NAD(+) = dihydroxyacetone phosphate + NADH + H(+). It catalyses the reaction sn-glycerol 3-phosphate + NADP(+) = dihydroxyacetone phosphate + NADPH + H(+). Its pathway is membrane lipid metabolism; glycerophospholipid metabolism. In terms of biological role, catalyzes the reduction of the glycolytic intermediate dihydroxyacetone phosphate (DHAP) to sn-glycerol 3-phosphate (G3P), the key precursor for phospholipid synthesis. The sequence is that of Glycerol-3-phosphate dehydrogenase [NAD(P)+] from Desulfitobacterium hafniense (strain Y51).